A 412-amino-acid chain; its full sequence is Argininosuccinate synthase (412 aa).

ATP-binding positions include 10–18 (AYSGGLDTS) and Ala36. Positions 87 and 92 each coordinate L-citrulline. Tyr87 carries the phosphotyrosine modification. Lys112 carries the N6-acetyllysine modification. At Tyr113 the chain carries Phosphotyrosine. Residue 115 to 123 (SHGATGKGN) coordinates ATP. Residues Thr119, Asn123, and Asp124 each coordinate L-aspartate. Asn123 is a binding site for L-citrulline. Arg127 lines the L-citrulline pocket. N6-acetyllysine; by CLOCK is present on residues Lys165 and Lys176. Positions 180 and 189 each coordinate L-citrulline. Ser180 carries the phosphoserine modification. Thr219 carries the phosphothreonine modification. L-citrulline-binding residues include Glu270 and Tyr282.

The protein belongs to the argininosuccinate synthase family. Type 1 subfamily. As to quaternary structure, homotetramer. Interacts with NMRAL1. Interacts with CLOCK; in a circadian manner. Forms tissue-specific complexes with ASL, SLC7A1, HSP90AA1 and nitric oxide synthase NOS1, NOS2 or NOS3; the complex regulates cell-autonomous L-arginine synthesis and citrulline recycling while channeling extracellular L-arginine to nitric oxide synthesis pathway. In terms of processing, acetylated by CLOCK in a circadian manner which negatively regulates its enzyme activity. Deacetylated by histone deacetylases. As to expression, expressed in adult liver.

Its subcellular location is the cytoplasm. It localises to the cytosol. It catalyses the reaction L-citrulline + L-aspartate + ATP = 2-(N(omega)-L-arginino)succinate + AMP + diphosphate + H(+). Its pathway is amino-acid biosynthesis; L-arginine biosynthesis; L-arginine from L-ornithine and carbamoyl phosphate: step 2/3. The protein operates within nitrogen metabolism; urea cycle; (N(omega)-L-arginino)succinate from L-aspartate and L-citrulline: step 1/1. Its function is as follows. One of the enzymes of the urea cycle, the metabolic pathway transforming neurotoxic amonia produced by protein catabolism into inocuous urea in the liver of ureotelic animals. Catalyzes the formation of arginosuccinate from aspartate, citrulline and ATP and together with ASL it is responsible for the biosynthesis of arginine in most body tissues. The polypeptide is Argininosuccinate synthase (Homo sapiens (Human)).